The sequence spans 322 residues: Lipoyl synthase (322 aa).

Positions 68, 73, 79, 94, 98, 101, and 309 each coordinate [4Fe-4S] cluster. A Radical SAM core domain is found at 80–298 (FNHGTASFMI…RVAGVEMGFS (219 aa)).

Belongs to the radical SAM superfamily. Lipoyl synthase family. The cofactor is [4Fe-4S] cluster.

The protein localises to the cytoplasm. It catalyses the reaction [[Fe-S] cluster scaffold protein carrying a second [4Fe-4S](2+) cluster] + N(6)-octanoyl-L-lysyl-[protein] + 2 oxidized [2Fe-2S]-[ferredoxin] + 2 S-adenosyl-L-methionine + 4 H(+) = [[Fe-S] cluster scaffold protein] + N(6)-[(R)-dihydrolipoyl]-L-lysyl-[protein] + 4 Fe(3+) + 2 hydrogen sulfide + 2 5'-deoxyadenosine + 2 L-methionine + 2 reduced [2Fe-2S]-[ferredoxin]. The protein operates within protein modification; protein lipoylation via endogenous pathway; protein N(6)-(lipoyl)lysine from octanoyl-[acyl-carrier-protein]: step 2/2. Catalyzes the radical-mediated insertion of two sulfur atoms into the C-6 and C-8 positions of the octanoyl moiety bound to the lipoyl domains of lipoate-dependent enzymes, thereby converting the octanoylated domains into lipoylated derivatives. This chain is Lipoyl synthase, found in Idiomarina loihiensis (strain ATCC BAA-735 / DSM 15497 / L2-TR).